Consider the following 316-residue polypeptide: Pantothenate kinase (316 aa).

Position 95–102 (95–102) interacts with ATP; the sequence is GSVAVGKS.

This sequence belongs to the prokaryotic pantothenate kinase family.

It localises to the cytoplasm. The enzyme catalyses (R)-pantothenate + ATP = (R)-4'-phosphopantothenate + ADP + H(+). The protein operates within cofactor biosynthesis; coenzyme A biosynthesis; CoA from (R)-pantothenate: step 1/5. The sequence is that of Pantothenate kinase from Shewanella baltica (strain OS223).